The following is a 338-amino-acid chain: Photosystem II assembly lipoprotein Ycf48 (338 aa).

The first 23 residues, 1-23 (MKKIITSFPNLLLSILLCFVLSS), serve as a signal peptide directing secretion. Residue cysteine 24 is the site of N-palmitoyl cysteine attachment. Cysteine 24 carries S-diacylglycerol cysteine lipidation.

The protein belongs to the Ycf48 family. In terms of assembly, part of early PSII assembly complexes which includes D1 (psbA) and PsbI; not found in mature PSII. Binds to the lumenal side of PSII complexes. Interacts with YidC.

Its subcellular location is the cellular thylakoid membrane. Its function is as follows. A factor required for optimal assembly of photosystem II (PSII), acting in the early stages of PSII assembly. Also plays a role in replacement of photodamaged D1 (psbA). Assists YidC in synthesis of chlorophyll-binding proteins. In Prochlorococcus marinus (strain MIT 9312), this protein is Photosystem II assembly lipoprotein Ycf48.